Consider the following 399-residue polypeptide: 1-deoxy-D-xylulose 5-phosphate reductoisomerase (399 aa).

Residues Thr-13, Gly-14, Ser-15, Ile-16, and Asn-127 each contribute to the NADPH site. Residue Lys-128 participates in 1-deoxy-D-xylulose 5-phosphate binding. Glu-129 contributes to the NADPH binding site. Asp-153 contributes to the Mn(2+) binding site. 1-deoxy-D-xylulose 5-phosphate is bound by residues Ser-154, Glu-155, Ser-187, and His-210. Glu-155 lines the Mn(2+) pocket. Gly-216 is an NADPH binding site. 1-deoxy-D-xylulose 5-phosphate-binding residues include Ser-223, Asn-228, Lys-229, and Glu-232. Residue Glu-232 coordinates Mn(2+).

It belongs to the DXR family. Mg(2+) is required as a cofactor. The cofactor is Mn(2+).

The enzyme catalyses 2-C-methyl-D-erythritol 4-phosphate + NADP(+) = 1-deoxy-D-xylulose 5-phosphate + NADPH + H(+). The protein operates within isoprenoid biosynthesis; isopentenyl diphosphate biosynthesis via DXP pathway; isopentenyl diphosphate from 1-deoxy-D-xylulose 5-phosphate: step 1/6. In terms of biological role, catalyzes the NADPH-dependent rearrangement and reduction of 1-deoxy-D-xylulose-5-phosphate (DXP) to 2-C-methyl-D-erythritol 4-phosphate (MEP). The chain is 1-deoxy-D-xylulose 5-phosphate reductoisomerase from Bordetella petrii (strain ATCC BAA-461 / DSM 12804 / CCUG 43448).